Here is a 133-residue protein sequence, read N- to C-terminus: MEFNGNLNHMEKRKSGYVTQKQFNEYKDSNDQRLIKIETTLAAQGEQISQLVQIVFLQGKQIKELQAEQKAQRVEFNARMDRFESLVLKSLESIGNTLTDFGKRFDSMETRLDSMDGRLDSMETRLDKIDPPK.

This sequence belongs to the UPF0134 family.

This Mycoplasma pneumoniae (strain ATCC 29342 / M129 / Subtype 1) (Mycoplasmoides pneumoniae) protein is UPF0134 protein MPN_151.